Here is a 257-residue protein sequence, read N- to C-terminus: Capsid protein (257 aa).

A Bipartite nuclear localization signal motif is present at residues 3-20 (KRTGDILISTPVSKVRRK). The short motif at 40–54 (KRRSWTYRPMYRKPR) is the Nuclear localization signal element. The segment at 68–85 (CEGPCKVQSYEQRDDVKH) is a zinc-finger region. The short motif at 101-122 (ITHRVGKRFCIKSIYILGKIWM) is the Nuclear export signal element. Residues 201–248 (KRFFKVNTHVVYNHQEQAKYENHTENALLLYMACTHASNPVYATLKIR) carry the Bipartite nuclear localization signal motif.

Belongs to the geminiviridae capsid protein family. In terms of assembly, homomultimer. Binds to single-stranded and double-stranded viral DNA. Interacts (via nuclear localization signals) with host importin alpha-1a.

Its subcellular location is the virion. It localises to the host nucleus. Functionally, encapsidates the viral genome into characteristic twinned ('geminate') particles. Binds the genomic viral ssDNA and shuttles it into and out of the cell nucleus. Plays a role in protection of the genome from degradation, virus acquisition and transmission by insect vectors, infectivity, and systemic movement. The CP of monopartite geminiviruses is absolutely essential for virus movement. In Tomato yellow leaf curl Sardinia virus (isolate Spain-1) (TYLCSV), this protein is Capsid protein.